We begin with the raw amino-acid sequence, 141 residues long: Large ribosomal subunit protein uL11 (141 aa).

This sequence belongs to the universal ribosomal protein uL11 family. In terms of assembly, part of the ribosomal stalk of the 50S ribosomal subunit. Interacts with L10 and the large rRNA to form the base of the stalk. L10 forms an elongated spine to which L12 dimers bind in a sequential fashion forming a multimeric L10(L12)X complex. In terms of processing, one or more lysine residues are methylated.

Its function is as follows. Forms part of the ribosomal stalk which helps the ribosome interact with GTP-bound translation factors. The protein is Large ribosomal subunit protein uL11 of Nostoc punctiforme (strain ATCC 29133 / PCC 73102).